A 66-amino-acid chain; its full sequence is uncharacterized protein (66 aa).

2 helical membrane passes run 6–26 (KIIM…HFVG) and 39–59 (VTFF…SILL).

Its subcellular location is the cell membrane. This is an uncharacterized protein from Bacillus subtilis (strain 168).